The primary structure comprises 316 residues: NADH-quinone oxidoreductase subunit H (316 aa).

The next 8 membrane-spanning stretches (helical) occupy residues 6–26 (PAVVIGILLSTVIVAAWLIWV), 74–94 (FVIAPAIVMVTMLLGFVVVPF), 98–118 (VGVIDFNFGLLYFFALSSLAV), 145–165 (ISYEVFMGLAAMGVVMLAGSF), 177–197 (GWYVLPQFAGFLAFLVAAVAE), 233–253 (YLGITLNSAILVTLFFGGWLG), 256–276 (FLPPLAWFILKTLVFILFFIL), and 296–316 (VMLPLTLANIVVTGAVGLSVP).

The protein belongs to the complex I subunit 1 family. NDH-1 is composed of 14 different subunits. Subunits NuoA, H, J, K, L, M, N constitute the membrane sector of the complex.

The protein localises to the cell inner membrane. It carries out the reaction a quinone + NADH + 5 H(+)(in) = a quinol + NAD(+) + 4 H(+)(out). Functionally, NDH-1 shuttles electrons from NADH, via FMN and iron-sulfur (Fe-S) centers, to quinones in the respiratory chain. The immediate electron acceptor for the enzyme in this species is believed to be ubiquinone. Couples the redox reaction to proton translocation (for every two electrons transferred, four hydrogen ions are translocated across the cytoplasmic membrane), and thus conserves the redox energy in a proton gradient. This subunit may bind ubiquinone. This is NADH-quinone oxidoreductase subunit H from Methylococcus capsulatus (strain ATCC 33009 / NCIMB 11132 / Bath).